The chain runs to 127 residues: Snaclec macrovipecetin subunit beta (127 aa).

Intrachain disulfides connect cysteine 4/cysteine 15, cysteine 32/cysteine 121, and cysteine 98/cysteine 113. A C-type lectin domain is found at 11-122 (YEGHCYKVFD…CSRTYKFVCK (112 aa)).

Heterodimer of subunits alpha and beta; disulfide-linked. Expressed by the venom gland.

Its subcellular location is the secreted. Its function is as follows. Interferes with one step of hemostasis (modulation of platelet aggregation, or coagulation cascade, for example). The sequence is that of Snaclec macrovipecetin subunit beta from Macrovipera lebetinus (Levantine viper).